A 384-amino-acid chain; its full sequence is Queuine tRNA-ribosyltransferase (384 aa).

The Proton acceptor role is filled by Asp92. Substrate contacts are provided by residues 92 to 96 (DSGGF), Asp146, Gln192, and Gly219. The RNA binding stretch occupies residues 250–256 (GVGTPAE). Residue Asp269 is the Nucleophile of the active site. Residues 274–278 (TRNAR) form an RNA binding; important for wobble base 34 recognition region. Positions 307, 309, 312, and 338 each coordinate Zn(2+).

It belongs to the queuine tRNA-ribosyltransferase family. In terms of assembly, homodimer. Within each dimer, one monomer is responsible for RNA recognition and catalysis, while the other monomer binds to the replacement base PreQ1. The cofactor is Zn(2+).

The enzyme catalyses 7-aminomethyl-7-carbaguanine + guanosine(34) in tRNA = 7-aminomethyl-7-carbaguanosine(34) in tRNA + guanine. Its pathway is tRNA modification; tRNA-queuosine biosynthesis. In terms of biological role, catalyzes the base-exchange of a guanine (G) residue with the queuine precursor 7-aminomethyl-7-deazaguanine (PreQ1) at position 34 (anticodon wobble position) in tRNAs with GU(N) anticodons (tRNA-Asp, -Asn, -His and -Tyr). Catalysis occurs through a double-displacement mechanism. The nucleophile active site attacks the C1' of nucleotide 34 to detach the guanine base from the RNA, forming a covalent enzyme-RNA intermediate. The proton acceptor active site deprotonates the incoming PreQ1, allowing a nucleophilic attack on the C1' of the ribose to form the product. After dissociation, two additional enzymatic reactions on the tRNA convert PreQ1 to queuine (Q), resulting in the hypermodified nucleoside queuosine (7-(((4,5-cis-dihydroxy-2-cyclopenten-1-yl)amino)methyl)-7-deazaguanosine). In Desulfosudis oleivorans (strain DSM 6200 / JCM 39069 / Hxd3) (Desulfococcus oleovorans), this protein is Queuine tRNA-ribosyltransferase.